Here is a 179-residue protein sequence, read N- to C-terminus: Large ribosomal subunit protein uL6 (179 aa).

This sequence belongs to the universal ribosomal protein uL6 family. As to quaternary structure, part of the 50S ribosomal subunit.

Its function is as follows. This protein binds to the 23S rRNA, and is important in its secondary structure. It is located near the subunit interface in the base of the L7/L12 stalk, and near the tRNA binding site of the peptidyltransferase center. This Clostridium novyi (strain NT) protein is Large ribosomal subunit protein uL6.